Consider the following 85-residue polypeptide: Large ribosomal subunit protein bL27 (85 aa).

The segment at 1–22 is disordered; sequence MAHKKAGGSTRNGRDSESKRLG.

Belongs to the bacterial ribosomal protein bL27 family.

The chain is Large ribosomal subunit protein bL27 from Marinomonas sp. (strain MWYL1).